A 307-amino-acid polypeptide reads, in one-letter code: Carbamate kinase (307 aa).

This sequence belongs to the carbamate kinase family.

The protein resides in the cytoplasm. The enzyme catalyses hydrogencarbonate + NH4(+) + ATP = carbamoyl phosphate + ADP + H2O + H(+). It functions in the pathway metabolic intermediate metabolism; carbamoyl phosphate degradation; CO(2) and NH(3) from carbamoyl phosphate: step 1/1. Functionally, carbamate kinase involved in the arginine deiminase pathway of fermentative arginine utilization. This is Carbamate kinase (arcC) from Halobacterium salinarum (strain ATCC 700922 / JCM 11081 / NRC-1) (Halobacterium halobium).